Here is a 354-residue protein sequence, read N- to C-terminus: DNA replication and repair protein RecF (354 aa).

An ATP-binding site is contributed by 30–37; it reads GDNGSGKT.

This sequence belongs to the RecF family.

The protein localises to the cytoplasm. The RecF protein is involved in DNA metabolism; it is required for DNA replication and normal SOS inducibility. RecF binds preferentially to single-stranded, linear DNA. It also seems to bind ATP. This is DNA replication and repair protein RecF from Idiomarina loihiensis (strain ATCC BAA-735 / DSM 15497 / L2-TR).